The sequence spans 556 residues: Formate--tetrahydrofolate ligase (556 aa).

65 to 72 (TPAGEGKS) lines the ATP pocket.

The protein belongs to the formate--tetrahydrofolate ligase family.

It carries out the reaction (6S)-5,6,7,8-tetrahydrofolate + formate + ATP = (6R)-10-formyltetrahydrofolate + ADP + phosphate. The protein operates within one-carbon metabolism; tetrahydrofolate interconversion. The sequence is that of Formate--tetrahydrofolate ligase from Streptococcus equi subsp. zooepidemicus (strain H70).